Here is a 449-residue protein sequence, read N- to C-terminus: MSTEPLADPAAGLGDPYAASSRETTEGRVYTVTGGDWDEFIDESAGEERIVINFGPQHPSAHGVLRLVFELEGETIVKARSVIGYLHTGIEKNVEYRTWTQGVTFVTRMDYLAPLHNETAYCMAVEKLLGVEAPPRAQTFRVMLMELSRIASHLVFLATGAMEMGATTGMTFGFREREEVLHLLEYLTGLRMNHAFVRPGGVAQDLPEDYRQKVLDFIKVMDSRLPSYDKLFTGQPIWKQRLKDVGYLPLDGCMQLGVTGPVLRSAGLAWDLRKVQPYCGYEDYEFEVPTSTGADCYARYLLRLEEMHQSLKIIRQCLDKMEPGPVMVSDAKIAWPAKLTIGPDGMGNSLEHVRKIMGQSMESLIHHFKLVTEGFDVPPGQVYVPVESPRGELGYHVVSDGGTRPMRVHVREPSFVNLQALPAMVEGGLMADAIASLASLDPVMGGVDR.

It belongs to the complex I 49 kDa subunit family. In terms of assembly, NDH-1 is composed of 14 different subunits. Subunits NuoB, C, D, E, F, and G constitute the peripheral sector of the complex.

It localises to the cell membrane. The catalysed reaction is a quinone + NADH + 5 H(+)(in) = a quinol + NAD(+) + 4 H(+)(out). Functionally, NDH-1 shuttles electrons from NADH, via FMN and iron-sulfur (Fe-S) centers, to quinones in the respiratory chain. The immediate electron acceptor for the enzyme in this species is believed to be a menaquinone. Couples the redox reaction to proton translocation (for every two electrons transferred, four hydrogen ions are translocated across the cytoplasmic membrane), and thus conserves the redox energy in a proton gradient. This chain is NADH-quinone oxidoreductase subunit D, found in Saccharopolyspora erythraea (strain ATCC 11635 / DSM 40517 / JCM 4748 / NBRC 13426 / NCIMB 8594 / NRRL 2338).